The chain runs to 203 residues: Small ribosomal subunit protein uS5 (203 aa).

Residues 49–112 (FEERVVKIKR…KNANNNLIKV (64 aa)) enclose the S5 DRBM domain.

It belongs to the universal ribosomal protein uS5 family. As to quaternary structure, part of the 30S ribosomal subunit. Contacts proteins S4 and S8.

Functionally, with S4 and S12 plays an important role in translational accuracy. Located at the back of the 30S subunit body where it stabilizes the conformation of the head with respect to the body. This is Small ribosomal subunit protein uS5 from Ureaplasma parvum serovar 3 (strain ATCC 700970).